Reading from the N-terminus, the 454-residue chain is tRNA modification GTPase MnmE (454 aa).

Residues arginine 23, glutamate 80, and lysine 120 each contribute to the (6S)-5-formyl-5,6,7,8-tetrahydrofolate site. The TrmE-type G domain occupies 216–377 (GMKVVIAGRP…LRNHLKQSMG (162 aa)). Asparagine 226 lines the K(+) pocket. Residues 226–231 (NAGKSS), 245–251 (TDIAGTT), 270–273 (DTAG), 335–338 (NKAD), and 358–360 (SAR) contribute to the GTP site. Serine 230 provides a ligand contact to Mg(2+). Residues threonine 245, isoleucine 247, and threonine 250 each coordinate K(+). Threonine 251 contacts Mg(2+). (6S)-5-formyl-5,6,7,8-tetrahydrofolate is bound at residue lysine 454.

The protein belongs to the TRAFAC class TrmE-Era-EngA-EngB-Septin-like GTPase superfamily. TrmE GTPase family. Homodimer. Heterotetramer of two MnmE and two MnmG subunits. It depends on K(+) as a cofactor.

It is found in the cytoplasm. In terms of biological role, exhibits a very high intrinsic GTPase hydrolysis rate. Involved in the addition of a carboxymethylaminomethyl (cmnm) group at the wobble position (U34) of certain tRNAs, forming tRNA-cmnm(5)s(2)U34. In Escherichia coli O7:K1 (strain IAI39 / ExPEC), this protein is tRNA modification GTPase MnmE.